Reading from the N-terminus, the 41-residue chain is Conotoxin Bu22 (41 aa).

Residues 1 to 25 (SDRASDGRNAAANDRASDLVALTVR) constitute a propeptide that is removed on maturation. 2 cysteine pairs are disulfide-bonded: C27–C33 and C28–C40.

The protein belongs to the conotoxin A superfamily. Expressed by the venom duct.

The protein localises to the secreted. This chain is Conotoxin Bu22, found in Conus bullatus (Bubble cone).